The following is a 380-amino-acid chain: Chaperone protein DnaJ (380 aa).

The 66-residue stretch at 5-70 (DYYEVLGVAK…QKRAAYDQYG (66 aa)) folds into the J domain. The CR-type zinc-finger motif lies at 140 to 218 (GYDTQIRVPS…CHGAGKVKET (79 aa)). Zn(2+)-binding residues include C153, C156, C170, C173, C192, C195, C206, and C209. 4 CXXCXGXG motif repeats span residues 153-160 (CEVCHGSG), 170-177 (CPTCSGSG), 192-199 (CPKCHGTG), and 206-213 (CGHCHGAG).

The protein belongs to the DnaJ family. Homodimer. It depends on Zn(2+) as a cofactor.

The protein localises to the cytoplasm. In terms of biological role, participates actively in the response to hyperosmotic and heat shock by preventing the aggregation of stress-denatured proteins and by disaggregating proteins, also in an autonomous, DnaK-independent fashion. Unfolded proteins bind initially to DnaJ; upon interaction with the DnaJ-bound protein, DnaK hydrolyzes its bound ATP, resulting in the formation of a stable complex. GrpE releases ADP from DnaK; ATP binding to DnaK triggers the release of the substrate protein, thus completing the reaction cycle. Several rounds of ATP-dependent interactions between DnaJ, DnaK and GrpE are required for fully efficient folding. Also involved, together with DnaK and GrpE, in the DNA replication of plasmids through activation of initiation proteins. This Paraburkholderia xenovorans (strain LB400) protein is Chaperone protein DnaJ.